Consider the following 552-residue polypeptide: Cation transporter HKT1;1 (552 aa).

At 1 to 70 (MHPPSLVLDT…QSYSFLVCKS (70 aa)) the chain is on the cytoplasmic side. The next 2 membrane-spanning stretches (helical) occupy residues 71–91 (NPLV…FLAL) and 133–153 (LWVL…MLGL). At 154–221 (YFNNANANRN…TYNPCAVLVR (68 aa)) the chain is on the cytoplasmic side. 2 helical membrane passes run 222–242 (IVTG…IIYF) and 291–311 (VLLL…SPLL). The Cytoplasmic portion of the chain corresponds to 312 to 348 (RLCVWVLGKVSGKAEYAYILQHPGETGYKHLHVRRNS). Helical transmembrane passes span 349 to 369 (VYIV…ICSF) and 402 to 422 (ILDI…VMYL). The Cytoplasmic portion of the chain corresponds to 423–448 (PSDASFLTANADNQPLTDKKTNSISR). 2 helical membrane passes run 449-471 (ALWR…LACI) and 524-544 (GFVG…MFLG). Topologically, residues 545 to 552 (RLKEFILK) are cytoplasmic.

Belongs to the TrkH potassium transport family. HKT (TC 2.A.38.3) subfamily. As to expression, expressed in shoots. In roots, expressed in epidermis, exodermis, cortex, and sieve elements and companion cells of phloem. In mature leaves, expressed in large highly vacuolated cells of the adaxial epidermis, phloem and xylem.

The protein localises to the membrane. The enzyme catalyses Na(+)(in) = Na(+)(out). In terms of biological role, functions as a low-affinity sodium transporter. This chain is Cation transporter HKT1;1, found in Oryza sativa subsp. japonica (Rice).